The sequence spans 299 residues: MNNIIDGKKLAEEIIVKVKAETIKLRNNYKIQPGIAVIIVGDDPASHVYVTSKSKKAEECGFFSIKHMLSKETSEKELLQLIATLNSDPKIHGILVQLPLPAHINTNCVTQAIAFQKDVDGFHYINIGKLSCNTLEDAIIPCTPAGAMIMIEQQCGRDLSGLDAVVVGRSNIVGKPMAALLTAANATVTIAHSRTRDLDDVCRSADILVAAVGRPQIIKKDWVKNGAIVIDVGINRIAAPEKGIGKTRLVGDVDFEAIKGKTAAITPVPGGVGPMTIAMLMVNTLNAAARLYNLPVLKL.

Residues 168 to 170 (GRS), S193, and I234 each bind NADP(+).

The protein belongs to the tetrahydrofolate dehydrogenase/cyclohydrolase family. In terms of assembly, homodimer.

The enzyme catalyses (6R)-5,10-methylene-5,6,7,8-tetrahydrofolate + NADP(+) = (6R)-5,10-methenyltetrahydrofolate + NADPH. The catalysed reaction is (6R)-5,10-methenyltetrahydrofolate + H2O = (6R)-10-formyltetrahydrofolate + H(+). Its pathway is one-carbon metabolism; tetrahydrofolate interconversion. Its function is as follows. Catalyzes the oxidation of 5,10-methylenetetrahydrofolate to 5,10-methenyltetrahydrofolate and then the hydrolysis of 5,10-methenyltetrahydrofolate to 10-formyltetrahydrofolate. The protein is Bifunctional protein FolD of Bartonella quintana (strain Toulouse) (Rochalimaea quintana).